Here is a 279-residue protein sequence, read N- to C-terminus: Probable cyclic nucleotide phosphodiesterase Psyc_2036 (279 aa).

The Fe cation site is built by D23, H25, D70, N100, H179, H218, and H220. AMP is bound by residues H25, D70, and N100–H101. H220 is a binding site for AMP.

Belongs to the cyclic nucleotide phosphodiesterase class-III family. The cofactor is Fe(2+).

This chain is Probable cyclic nucleotide phosphodiesterase Psyc_2036, found in Psychrobacter arcticus (strain DSM 17307 / VKM B-2377 / 273-4).